The following is a 305-amino-acid chain: N-acetylmuramic acid 6-phosphate etherase (305 aa).

Positions 1 to 24 (MTTPPSSPLSDPRRTEGVHPTHTD) are disordered. Over residues 11–24 (DPRRTEGVHPTHTD) the composition is skewed to basic and acidic residues. The SIS domain occupies 62 to 225 (ALPRLERGGR…SSALMVRLGK (164 aa)). Catalysis depends on E90, which acts as the Proton donor. E121 is a catalytic residue.

The protein belongs to the GCKR-like family. MurNAc-6-P etherase subfamily. In terms of assembly, homodimer.

The catalysed reaction is N-acetyl-D-muramate 6-phosphate + H2O = N-acetyl-D-glucosamine 6-phosphate + (R)-lactate. The protein operates within amino-sugar metabolism; N-acetylmuramate degradation. In terms of biological role, specifically catalyzes the cleavage of the D-lactyl ether substituent of MurNAc 6-phosphate, producing GlcNAc 6-phosphate and D-lactate. The polypeptide is N-acetylmuramic acid 6-phosphate etherase (Deinococcus geothermalis (strain DSM 11300 / CIP 105573 / AG-3a)).